The chain runs to 216 residues: Somatotropin (216 aa).

An N-terminal signal peptide occupies residues Met1–Ala26. Zn(2+) is bound at residue His45. Cys78 and Cys189 form a disulfide bridge. Phosphoserine is present on Ser131. Glu198 is a binding site for Zn(2+). An intrachain disulfide couples Cys206 to Cys214.

This sequence belongs to the somatotropin/prolactin family.

It is found in the secreted. In terms of biological role, plays an important role in growth control. Its major role in stimulating body growth is to stimulate the liver and other tissues to secrete IGF1. It stimulates both the differentiation and proliferation of myoblasts. It also stimulates amino acid uptake and protein synthesis in muscle and other tissues. The polypeptide is Somatotropin (Gh1) (Rattus norvegicus (Rat)).